Reading from the N-terminus, the 257-residue chain is Zinc transporter ZupT (257 aa).

Helical transmembrane passes span 5–25 (LILT…GVLG), 32–52 (VLAF…LMEM), and 61–81 (GMSP…YFGL). 2 residues coordinate Fe(2+): Asn-120 and Glu-123. Zn(2+)-binding residues include Glu-123 and His-148. Residues Asn-149, Glu-152, and Glu-181 each coordinate Fe(2+). A Zn(2+)-binding site is contributed by Glu-152. Transmembrane regions (helical) follow at residues 182–202 (IFGG…IVMA), 203–223 (AIMA…LMPL), and 236–256 (GVLC…TIGI).

The protein belongs to the ZIP transporter (TC 2.A.5) family. ZupT subfamily.

It is found in the cell inner membrane. It carries out the reaction Zn(2+)(in) = Zn(2+)(out). Functionally, mediates zinc uptake. May also transport other divalent cations. The sequence is that of Zinc transporter ZupT from Salmonella arizonae (strain ATCC BAA-731 / CDC346-86 / RSK2980).